The following is a 514-amino-acid chain: Peptide chain release factor 3 (514 aa).

The 261-residue stretch at 8–268 (KKRRTFAIIS…TFLEFAPEPH (261 aa)) folds into the tr-type G domain. Residues 17 to 24 (SHPDAGKT), 85 to 89 (DTPGH), and 139 to 142 (NKLD) contribute to the GTP site.

This sequence belongs to the TRAFAC class translation factor GTPase superfamily. Classic translation factor GTPase family. PrfC subfamily.

The protein localises to the cytoplasm. Increases the formation of ribosomal termination complexes and stimulates activities of RF-1 and RF-2. It binds guanine nucleotides and has strong preference for UGA stop codons. It may interact directly with the ribosome. The stimulation of RF-1 and RF-2 is significantly reduced by GTP and GDP, but not by GMP. The polypeptide is Peptide chain release factor 3 (Streptococcus pyogenes serotype M1).